The sequence spans 232 residues: Cytidylate kinase (232 aa).

11 to 19 (GPAGAGKST) lines the ATP pocket.

The protein belongs to the cytidylate kinase family. Type 1 subfamily.

The protein localises to the cytoplasm. The enzyme catalyses CMP + ATP = CDP + ADP. It catalyses the reaction dCMP + ATP = dCDP + ADP. The sequence is that of Cytidylate kinase from Desulfitobacterium hafniense (strain Y51).